We begin with the raw amino-acid sequence, 172 residues long: Translationally-controlled tumor protein (172 aa).

The TCTP domain maps to 1 to 172; the sequence is MIIYRDLISH…FKDGLEMEKC (172 aa). Ser46 carries the phosphoserine; by PLK1 modification. Position 53 is a phosphoserine (Ser53). Ser64 carries the phosphoserine; by PLK1 modification. Positions 70 to 172 are required for reduction of TSC22D1 protein stability; the sequence is VDIVMNHHLQ…FKDGLEMEKC (103 aa).

It belongs to the TCTP family. In terms of assembly, homodimer. Interacts with STEAP3. Interacts with TSC22D1; interaction results in the destabilization of TSC22D1 protein. As to expression, found in several healthy and tumoral cells including erythrocytes, hepatocytes, macrophages, platelets, keratinocytes, erythroleukemia cells, gliomas, melanomas, hepatoblastomas, and lymphomas. It cannot be detected in kidney and renal cell carcinoma (RCC). Expressed in placenta and prostate.

The protein localises to the cytoplasm. Involved in calcium binding and microtubule stabilization. Acts as a negative regulator of TSC22D1-mediated apoptosis, via interaction with and destabilization of TSC22D1 protein. This is Translationally-controlled tumor protein (TPT1) from Homo sapiens (Human).